The following is a 1032-amino-acid chain: MPGRAEAGEAEEEAGAGSGSEAEEDALWERIEGVRHRLARALNPAKLTPYLRQCRVIDEQDEEEVLSTYRFPCRVNRTGRLMDILRCRGKRGYEAFLEALEFYYPEHFTLLTGQEPAQRCSMILDEEGPEGLTQFLMTEVRRLREARKSQLQREQQLQARGRVLEEERAGLEQRLRDQQQAQERCQRLREDWEAGSLELLRLKDENYMIAMRLAQLSEEKNSAVLRSRDLQLAVDQLKLKVSRLEEECALLRRARGPPPGAEEKEKEKEKEKEPDNVDLVSELRAENQRLTASLRELQEGLQQEASRPGAPGSERILLDILEHDWREAQDSRQELCQKLHAVQGELQWAEELRDQYLQEMEDLRLKHRTLQKDCDLYKHRMATVLAQLEEIEKERDQAIQSRDRIQLQYSQSLIEKDQYRKQVRGLEAERDELLTTLTSLEGTKALLEVQLQRAQGGTCLKACASSHSLCSNLSSTWSLSEFPSPLGGPEATGEAAVMGGPEPHNSEEATDSEKEINRLSILPFPPSAGSILRRQREEDPAPPKRSFSSMSDITGSVTLKPWSPGLSSSSSSDSVWPLGKPEGLLARGCGLDFLNRSLAIRVSGRSPPGGPEPQDKGPDGLSFYGDRWSGAVVRRVLSGPGSARMEPREQRVEAAGLEGACLEAEAQQRTLLWNQGSTLPSLMDSKACQSFHEALEAWAKGPGAEPFYIRANLTLPERADPHALCVKAQEILRLVDSAYKRRQEWFCTRVDPLTLRDLDRGTVPNYQRAQQLLEVQEKCLPSSRHRGPRSNLKKRALDQLRLVRPKPVGAPAGDSPDQLLLEPCAEPERSLRPYSLVRPLLVSALRPVVLLPECLAPRLIRNLLDLPSSRLDFQVCPAESLSGEELCPSSAPGAPKAQPATPGLGSRIRAIQESVGKKHCLLELGARGVRELVQNEIYPIVIHVEVTEKNVREVRGLLGRPGWRDSELLRQCRGSEQVLWGLPCSWVQVPAHEWGHAEELAKVVRGRILQEQARLVWVECGSSRGCPSSSEA.

Disordered regions lie at residues methionine 1–glutamate 23, arginine 253–asparagine 276, and glutamate 481–isoleucine 553. At serine 18 the chain carries Phosphoserine. In terms of domain architecture, CARD spans glutamate 23–glutamate 115. Residues threonine 138–glycine 456 are a coiled coil. Composition is skewed to basic and acidic residues over residues alanine 261–asparagine 276 and histidine 504–asparagine 517.

In terms of assembly, CARD10 and BCL10 bind to each other by CARD-CARD interaction. They both participate in a complex with MALT1, where MALT1 binds to BCL10. Interacts with TMEM43; this interaction is essential for EGFR-mediated NF-kappa-B activation. As to expression, detected in adult heart, kidney and liver; lower levels in intestine, placenta, muscle and lung. Also found in fetal lung, liver and kidney.

Its subcellular location is the cytoplasm. Scaffold protein that plays an important role in mediating the activation of NF-kappa-B via BCL10 or EGFR. This is Caspase recruitment domain-containing protein 10 (CARD10) from Homo sapiens (Human).